The chain runs to 678 residues: Penicillin-binding protein activator LpoA (678 aa).

The signal sequence occupies residues 1–26 (MVPSTFSRLKAARCLPVVLAALIFAG). Residue cysteine 27 is the site of N-palmitoyl cysteine attachment. Cysteine 27 carries S-diacylglycerol cysteine lipidation. Low complexity-rich tracts occupy residues 300–310 (AADVAEQPQPQ), 330–340 (QPAAQPVPVSA), and 513–528 (TTNN…DDQF). Disordered regions lie at residues 300 to 340 (AADV…PVSA) and 496 to 528 (ALTG…DDQF).

This sequence belongs to the LpoA family. Interacts with PBP1a.

The protein localises to the cell outer membrane. In terms of biological role, regulator of peptidoglycan synthesis that is essential for the function of penicillin-binding protein 1A (PBP1a). This Shigella flexneri serotype 5b (strain 8401) protein is Penicillin-binding protein activator LpoA.